Consider the following 333-residue polypeptide: Holliday junction branch migration complex subunit RuvB (333 aa).

The interval 1 to 182 (MDERLLSGES…FGVLSRLEYY (182 aa)) is large ATPase domain (RuvB-L). ATP-binding positions include Leu-21, Arg-22, Gly-63, Lys-66, Thr-67, Thr-68, 129 to 131 (EDF), Arg-172, Tyr-182, and Arg-219. Thr-67 is a Mg(2+) binding site. The small ATPAse domain (RuvB-S) stretch occupies residues 183–253 (TVDQLSAIVE…ITQMALELLQ (71 aa)). Residues 256–333 (KLGLDHIDHK…EHFGMEMPKV (78 aa)) are head domain (RuvB-H). DNA is bound by residues Arg-311 and Arg-316.

This sequence belongs to the RuvB family. In terms of assembly, homohexamer. Forms an RuvA(8)-RuvB(12)-Holliday junction (HJ) complex. HJ DNA is sandwiched between 2 RuvA tetramers; dsDNA enters through RuvA and exits via RuvB. An RuvB hexamer assembles on each DNA strand where it exits the tetramer. Each RuvB hexamer is contacted by two RuvA subunits (via domain III) on 2 adjacent RuvB subunits; this complex drives branch migration. In the full resolvosome a probable DNA-RuvA(4)-RuvB(12)-RuvC(2) complex forms which resolves the HJ.

Its subcellular location is the cytoplasm. It catalyses the reaction ATP + H2O = ADP + phosphate + H(+). The RuvA-RuvB-RuvC complex processes Holliday junction (HJ) DNA during genetic recombination and DNA repair, while the RuvA-RuvB complex plays an important role in the rescue of blocked DNA replication forks via replication fork reversal (RFR). RuvA specifically binds to HJ cruciform DNA, conferring on it an open structure. The RuvB hexamer acts as an ATP-dependent pump, pulling dsDNA into and through the RuvAB complex. RuvB forms 2 homohexamers on either side of HJ DNA bound by 1 or 2 RuvA tetramers; 4 subunits per hexamer contact DNA at a time. Coordinated motions by a converter formed by DNA-disengaged RuvB subunits stimulates ATP hydrolysis and nucleotide exchange. Immobilization of the converter enables RuvB to convert the ATP-contained energy into a lever motion, pulling 2 nucleotides of DNA out of the RuvA tetramer per ATP hydrolyzed, thus driving DNA branch migration. The RuvB motors rotate together with the DNA substrate, which together with the progressing nucleotide cycle form the mechanistic basis for DNA recombination by continuous HJ branch migration. Branch migration allows RuvC to scan DNA until it finds its consensus sequence, where it cleaves and resolves cruciform DNA. This is Holliday junction branch migration complex subunit RuvB from Bacillus mycoides (strain KBAB4) (Bacillus weihenstephanensis).